The chain runs to 419 residues: N-acylglucosamine 2-epimerase (419 aa).

Residues 185–206 (LLNLVEQLGEEDEEMTDKYAEL) are leucine-zipper. Ser-418 carries the post-translational modification Phosphoserine.

It belongs to the N-acylglucosamine 2-epimerase family. As to quaternary structure, homodimer. Forms a heterodimer with renin and inhibits its activity. In terms of tissue distribution, kidney, adrenal gland, brain, lung, spleen, ovary, testis and heart.

The enzyme catalyses an N-acyl-D-glucosamine = an N-acyl-D-mannosamine. Its pathway is amino-sugar metabolism; N-acetylneuraminate degradation. Its function is as follows. Catalyzes the interconversion of N-acetylglucosamine to N-acetylmannosamine. Involved in the N-glycolylneuraminic acid (Neu5Gc) degradation pathway. The polypeptide is N-acylglucosamine 2-epimerase (Renbp) (Rattus norvegicus (Rat)).